The following is a 224-amino-acid chain: Homeobox protein Hox-B6 (224 aa).

The Antp-type hexapeptide motif lies at 127 to 132; sequence VYPWMQ. A DNA-binding region (homeobox) is located at residues 146–205; it reads GRRGRQTYTRYQTLELEKEFHYNRYLTRRRRIEIAHALCLTERQIKIWFQNRRMKWKKES. At S214 the chain carries Phosphoserine.

The protein belongs to the Antp homeobox family.

It is found in the nucleus. Sequence-specific transcription factor which is part of a developmental regulatory system that provides cells with specific positional identities on the anterior-posterior axis. In Mus musculus (Mouse), this protein is Homeobox protein Hox-B6 (Hoxb6).